We begin with the raw amino-acid sequence, 340 residues long: Ferrochelatase (340 aa).

The Fe cation site is built by His-189 and Glu-292.

The protein belongs to the ferrochelatase family.

Its subcellular location is the cytoplasm. It catalyses the reaction heme b + 2 H(+) = protoporphyrin IX + Fe(2+). Its pathway is porphyrin-containing compound metabolism; protoheme biosynthesis; protoheme from protoporphyrin-IX: step 1/1. Its function is as follows. Catalyzes the ferrous insertion into protoporphyrin IX. This is Ferrochelatase from Pseudomonas syringae pv. tomato (strain ATCC BAA-871 / DC3000).